We begin with the raw amino-acid sequence, 293 residues long: Lymphocyte antigen 6 complex locus protein G6f (293 aa).

The first 19 residues, 1 to 19 (MAMVVFLLLYLCGHPQAAA), serve as a signal peptide directing secretion. The Ig-like V-type domain maps to 20–124 (DNIQTLYVPS…HKYQNWRVYD (105 aa)). The Extracellular portion of the chain corresponds to 20–237 (DNIQTLYVPS…APLPSWDVSW (218 aa)). Cysteines 37 and 108 form a disulfide. An N-linked (GlcNAc...) asparagine glycan is attached at Asn90. The helical transmembrane segment at 238 to 258 (ILMLLFAAGQGVTIIALSIVI) threads the bilayer. Residues 259–293 (WRHQRAQGTQDREPSIPHFKPEVQVYENIHLARLR) lie on the Cytoplasmic side of the membrane. Tyr284 bears the Phosphotyrosine mark.

Homodimer; disulfide-linked. Interacts with GRB2 and GRB7 in a phosphorylation-dependent manner. In terms of processing, N-glycosylated.

It localises to the cell membrane. May play a role in the downstream signal transduction pathways involving GRB2 and GRB7. The polypeptide is Lymphocyte antigen 6 complex locus protein G6f (Ly6g6f) (Rattus norvegicus (Rat)).